The primary structure comprises 94 residues: C-X-C motif chemokine 11 (94 aa).

Residues 1–21 (MSVKGMAIALAVILCATVVQG) form the signal peptide. Residue arginine 27 is modified to Citrulline; by PAD2. Disulfide bonds link cysteine 30-cysteine 57 and cysteine 32-cysteine 74.

As to quaternary structure, interacts with TNFAIP6 (via Link domain). As to expression, high levels in peripheral blood leukocytes, pancreas and liver astrocytes. Moderate levels in thymus, spleen and lung. Low levels in placenta, prostate and small intestine. Also found in epidermal basal layer keratinocytes in skin disorders.

The protein resides in the secreted. Its function is as follows. Chemotactic for interleukin-activated T-cells but not unstimulated T-cells, neutrophils or monocytes. Induces calcium release in activated T-cells. Binds to CXCR3. May play an important role in CNS diseases which involve T-cell recruitment. May play a role in skin immune responses. The protein is C-X-C motif chemokine 11 (CXCL11) of Homo sapiens (Human).